The primary structure comprises 768 residues: DNA ligase 1 (768 aa).

Residues 42 to 139 (VEVSQSSSDS…KEPPLESNAR (98 aa)) form a disordered region. Residues 52–99 (KNVDGRSTSEKRKVESVKLVDESKHNNHDDTGTQNVERENNIVSEAKK) show a composition bias toward basic and acidic residues. Residues 104–124 (GSSSSSSDAVSSNNDSGASTP) are compositionally biased toward low complexity. Positions 309–318 (KLRLQLAEKT) are interaction with target DNA. Glutamate 414 serves as a coordination point for ATP. Lysine 416 serves as the catalytic N6-AMP-lysine intermediate. Arginine 421 and arginine 437 together coordinate ATP. Glutamate 469 serves as a coordination point for Mg(2+). The segment at 490-492 (KRK) is interaction with target DNA. Glutamate 568 contacts Mg(2+). ATP contacts are provided by lysine 573, arginine 587, and lysine 593.

The protein belongs to the ATP-dependent DNA ligase family. Requires Mg(2+) as cofactor.

The protein localises to the nucleus. It carries out the reaction ATP + (deoxyribonucleotide)n-3'-hydroxyl + 5'-phospho-(deoxyribonucleotide)m = (deoxyribonucleotide)n+m + AMP + diphosphate.. DNA ligase that seals nicks in double-stranded DNA during DNA replication, DNA recombination and DNA repair. In Schizosaccharomyces pombe (strain 972 / ATCC 24843) (Fission yeast), this protein is DNA ligase 1 (cdc17).